Here is a 208-residue protein sequence, read N- to C-terminus: 3-isopropylmalate dehydratase small subunit (208 aa).

Belongs to the LeuD family. LeuD type 1 subfamily. In terms of assembly, heterodimer of LeuC and LeuD.

It catalyses the reaction (2R,3S)-3-isopropylmalate = (2S)-2-isopropylmalate. The protein operates within amino-acid biosynthesis; L-leucine biosynthesis; L-leucine from 3-methyl-2-oxobutanoate: step 2/4. In terms of biological role, catalyzes the isomerization between 2-isopropylmalate and 3-isopropylmalate, via the formation of 2-isopropylmaleate. The sequence is that of 3-isopropylmalate dehydratase small subunit from Granulibacter bethesdensis (strain ATCC BAA-1260 / CGDNIH1).